The chain runs to 1008 residues: Chitin synthase C (1008 aa).

Residues 1-160 (MIYEMMVMKR…GGRTIDPNNR (160 aa)) form a disordered region. Over residues 10-19 (RSANSRAQNN) the composition is skewed to low complexity. Positions 34–45 (ESPSRPVSSLGN) are enriched in polar residues. An N-linked (GlcNAc...) asparagine glycan is attached at Asn-312. The next 5 membrane-spanning stretches (helical) occupy residues 642 to 662 (FMQLIFTYFGLANFYLVFYFI), 682 to 702 (IFVILRYACILVMCLQFIISM), 717 to 737 (IIVYSIIMFYTIFCTMYLVVI), 755 to 775 (LFVNIVMSLLSTVGLYFYASF), and 787 to 807 (SAAYFIMLPSYICTLQVYAFC). A glycan (N-linked (GlcNAc...) asparagine) is linked at Asn-833. The next 2 helical transmembrane spans lie at 887-907 (MVSIWMVANVILAMAISEVYG) and 910-930 (AGGTNIYLAIILWSVVVLALI). Asn-961 is a glycosylation site (N-linked (GlcNAc...) asparagine).

This sequence belongs to the chitin synthase family. Class II subfamily.

The protein resides in the cell membrane. The catalysed reaction is [(1-&gt;4)-N-acetyl-beta-D-glucosaminyl](n) + UDP-N-acetyl-alpha-D-glucosamine = [(1-&gt;4)-N-acetyl-beta-D-glucosaminyl](n+1) + UDP + H(+). Functionally, polymerizes chitin, a structural polymer of the cell wall and septum, by transferring the sugar moiety of UDP-GlcNAc to the non-reducing end of the growing chitin polymer. Involved in cell wall integrity and mycelial morphology. Plays an important role in septal growth or maintenance. Acts as a positive regulator of conidiation, cellular responses to oxidative stresses, and the production of malic acid. Negatively regulates the citric acid production. This Aspergillus niger (strain ATCC MYA-4892 / CBS 513.88 / FGSC A1513) protein is Chitin synthase C.